Here is a 357-residue protein sequence, read N- to C-terminus: Aspartate-semialdehyde dehydrogenase (357 aa).

Residues threonine 12, glycine 13, threonine 14, valine 15, serine 37, serine 40, leucine 84, and aspartate 85 each contribute to the NADP(+) site. Catalysis depends on cysteine 151, which acts as the Acyl-thioester intermediate. Glycine 183 lines the NADP(+) pocket. Catalysis depends on histidine 247, which acts as the Proton acceptor. A Phosphoserine modification is found at serine 323. Asparagine 335 contributes to the NADP(+) binding site.

It belongs to the aspartate-semialdehyde dehydrogenase family.

Its subcellular location is the cytoplasm. It localises to the cytosol. It is found in the nucleus. The enzyme catalyses L-aspartate 4-semialdehyde + phosphate + NADP(+) = 4-phospho-L-aspartate + NADPH + H(+). It functions in the pathway amino-acid biosynthesis; L-methionine biosynthesis via de novo pathway; L-homoserine from L-aspartate: step 2/3. Its pathway is amino-acid biosynthesis; L-threonine biosynthesis; L-threonine from L-aspartate: step 2/5. Functionally, catalyzes the NADPH-dependent formation of L-aspartate 4-semialdehyde (L-ASA) by the reductive dephosphorylation of 4-phospho-L-aspartate. Mediates the second step in the biosynthesis of amino acids that derive from aspartate (the aspartate family of amino acids), including methioinine and threonine, the latter of which is a precursor to isoleucine. The polypeptide is Aspartate-semialdehyde dehydrogenase (Schizosaccharomyces pombe (strain 972 / ATCC 24843) (Fission yeast)).